A 220-amino-acid polypeptide reads, in one-letter code: uncharacterized protein (220 aa).

A disordered region spans residues 196 to 220; the sequence is KDDNSKDDNNDSEDLSKQIDNLKLD.

This is an uncharacterized protein from Invertebrate iridescent virus 6 (IIV-6).